A 440-amino-acid polypeptide reads, in one-letter code: Damage-control phosphatase ARMT1 (440 aa).

Mn(2+) is bound by residues aspartate 252 and asparagine 253. A substrate-binding site is contributed by 252–253; sequence DN. Residues glutamate 257 and aspartate 290 each contribute to the S-adenosyl-L-methionine site. Aspartate 290 is a binding site for Mn(2+). Substrate contacts are provided by residues 366-370 and lysine 403; that span reads DLNYR. Residues 400–403 carry the Subfamily III RTxK motif motif; sequence RTLK.

The protein belongs to the damage-control phosphatase family. Sugar phosphate phosphatase III subfamily. The cofactor is Mn(2+). Ni(2+) serves as cofactor. In terms of processing, automethylated.

The catalysed reaction is beta-D-fructose 1-phosphate + H2O = D-fructose + phosphate. The enzyme catalyses beta-D-fructose 6-phosphate = dihydroxyacetone + D-glyceraldehyde 3-phosphate. It carries out the reaction L-glutamyl-[protein] + S-adenosyl-L-methionine = [protein]-L-glutamate 5-O-methyl ester + S-adenosyl-L-homocysteine. In terms of biological role, metal-dependent phosphatase that shows phosphatase activity against several substrates, including fructose-1-phosphate and fructose-6-phosphate. Its preference for fructose-1-phosphate, a strong glycating agent that causes DNA damage rather than a canonical yeast metabolite, suggests a damage-control function in hexose phosphate metabolism. Has also been shown to have O-methyltransferase activity that methylates glutamate residues of target proteins to form gamma-glutamyl methyl ester residues. Possibly methylates PCNA, suggesting it is involved in the DNA damage response. This is Damage-control phosphatase ARMT1 from Xenopus laevis (African clawed frog).